Reading from the N-terminus, the 331-residue chain is Small ribosomal subunit protein uS2 (331 aa).

This sequence belongs to the universal ribosomal protein uS2 family.

The polypeptide is Small ribosomal subunit protein uS2 (Rhodopseudomonas palustris (strain BisB5)).